The sequence spans 189 residues: Heme-binding protein 1 (189 aa).

It belongs to the HEBP family. As to quaternary structure, monomer.

It is found in the cytoplasm. Functionally, may bind free porphyrinogens that may be present in the cell and thus facilitate removal of these potentially toxic compound. Binds with a high affinity to one molecule of heme or porphyrins. It binds metalloporphyrins, free porphyrins and N-methylprotoporphyrin with similar affinities. The polypeptide is Heme-binding protein 1 (HEBP1) (Sus scrofa (Pig)).